The sequence spans 167 residues: Large ribosomal subunit protein uL10 (167 aa).

It belongs to the universal ribosomal protein uL10 family. Part of the ribosomal stalk of the 50S ribosomal subunit. The N-terminus interacts with L11 and the large rRNA to form the base of the stalk. The C-terminus forms an elongated spine to which L12 dimers bind in a sequential fashion forming a multimeric L10(L12)X complex.

Its function is as follows. Forms part of the ribosomal stalk, playing a central role in the interaction of the ribosome with GTP-bound translation factors. This chain is Large ribosomal subunit protein uL10, found in Chromohalobacter salexigens (strain ATCC BAA-138 / DSM 3043 / CIP 106854 / NCIMB 13768 / 1H11).